The following is a 456-amino-acid chain: tRNA-2-methylthio-N(6)-dimethylallyladenosine synthase (456 aa).

An MTTase N-terminal domain is found at 3–120 (KKVYVKTFGC…LPQMIDQRRA (118 aa)). Cys12, Cys49, Cys83, Cys157, Cys161, and Cys164 together coordinate [4Fe-4S] cluster. Positions 143-377 (RIDGPSAFVS…QATIEENVQR (235 aa)) constitute a Radical SAM core domain. In terms of domain architecture, TRAM spans 380-447 (QAMVGKVERI…PHSLRGELVM (68 aa)).

The protein belongs to the methylthiotransferase family. MiaB subfamily. As to quaternary structure, monomer. Requires [4Fe-4S] cluster as cofactor.

Its subcellular location is the cytoplasm. It carries out the reaction N(6)-dimethylallyladenosine(37) in tRNA + (sulfur carrier)-SH + AH2 + 2 S-adenosyl-L-methionine = 2-methylsulfanyl-N(6)-dimethylallyladenosine(37) in tRNA + (sulfur carrier)-H + 5'-deoxyadenosine + L-methionine + A + S-adenosyl-L-homocysteine + 2 H(+). In terms of biological role, catalyzes the methylthiolation of N6-(dimethylallyl)adenosine (i(6)A), leading to the formation of 2-methylthio-N6-(dimethylallyl)adenosine (ms(2)i(6)A) at position 37 in tRNAs that read codons beginning with uridine. This is tRNA-2-methylthio-N(6)-dimethylallyladenosine synthase from Paraburkholderia phymatum (strain DSM 17167 / CIP 108236 / LMG 21445 / STM815) (Burkholderia phymatum).